Here is a 186-residue protein sequence, read N- to C-terminus: Inosine/xanthosine triphosphatase (186 aa).

A Mg(2+)-binding site is contributed by Gln75.

The protein belongs to the YjjX NTPase family. As to quaternary structure, homodimer. Mg(2+) is required as a cofactor. Mn(2+) serves as cofactor.

The catalysed reaction is XTP + H2O = XDP + phosphate + H(+). It catalyses the reaction ITP + H2O = IDP + phosphate + H(+). Functionally, phosphatase that hydrolyzes non-canonical purine nucleotides such as XTP and ITP to their respective diphosphate derivatives. Probably excludes non-canonical purines from DNA/RNA precursor pool, thus preventing their incorporation into DNA/RNA and avoiding chromosomal lesions. The sequence is that of Inosine/xanthosine triphosphatase from Shewanella baltica (strain OS195).